A 601-amino-acid polypeptide reads, in one-letter code: Putative pentatricopeptide repeat-containing protein At3g25060, mitochondrial (601 aa).

The transit peptide at 1–80 (MVQTKHFCML…KVFDELPQRG (80 aa)) directs the protein to the mitochondrion. PPR repeat units follow at residues 49–79 (GSSI…LPQR), 80–114 (GVSV…KIQP), 115–149 (DSST…GYKN), 150–180 (DVFV…MAKR), 181–215 (DVIC…GFGR), 216–250 (DRVV…GLPM), 251–281 (NVVV…MMFK), 282–316 (TAVS…GFQP), 317–347 (DLVT…ILKR), 351–381 (DRVT…VGRK), 382–416 (DLVC…NIEP), 417–452 (DHAT…KIQP), and 453–487 (SEKH…NALP). The segment at 488-563 (IWVALLSGCI…VPGYSAIEVN (76 aa)) is type E motif. Positions 564–594 (GELRTFLMEDLSHHEHYHMLQVLRNLKTEIR) are type E(+) motif.

The protein belongs to the PPR family. PCMP-E subfamily.

The protein localises to the mitochondrion. The protein is Putative pentatricopeptide repeat-containing protein At3g25060, mitochondrial (PCMP-E96) of Arabidopsis thaliana (Mouse-ear cress).